We begin with the raw amino-acid sequence, 403 residues long: Tubby-like F-box protein 6 (403 aa).

Positions 50–105 (SCWAQLPPELLREVLVRIEESEVWWPSRRDVVACAGVCRSWRGITKEIVRVPEASG) constitute an F-box domain.

Belongs to the TUB family. Ubiquitous.

This chain is Tubby-like F-box protein 6 (TULP6), found in Oryza sativa subsp. japonica (Rice).